We begin with the raw amino-acid sequence, 675 residues long: Protein PALS1 (675 aa).

The tract at residues 1–345 (MTTSYMNGHV…QQIKPPPAKE (345 aa)) is required for the correct localization of PALS1 and PATJ at cell-cell contacts and the normal formation of tight junctions and adherens junctions. 2 positions are modified to phosphoserine: Ser-14 and Ser-25. Residues 21–140 (LDLASPEEYP…LKHIQHTLVD (120 aa)) are interaction with PARD6B. The segment at 51–79 (RRSAQLERIRQQQEDMRRRREEEGKKQEL) is disordered. Residues 54–79 (AQLERIRQQQEDMRRRREEEGKKQEL) are compositionally biased toward basic and acidic residues. Residues Ser-83 and Ser-84 each carry the phosphoserine modification. L27 domains follow at residues 120-177 (NILD…SKAS) and 179-235 (PFPL…MQLE). Residues 181–243 (PLIANVQDLV…LEPITDERVY (63 aa)) are interaction with LIN7C. Residues 256 to 336 (IVRIEKARDI…TLTFVLIPSQ (81 aa)) enclose the PDZ domain. Residues 345–417 (ETVIHVKAHF…PGKSFQQQRE (73 aa)) enclose the SH3 domain. One can recognise a Guanylate kinase-like domain in the interval 479–660 (KRPIILIGPQ…AYQELLRLIN (182 aa)). 486 to 493 (GPQNCGQN) contacts ATP.

Belongs to the MAGUK family. Heterodimer with MPP1. Forms a heterotrimeric complex composed of PALS1, LIN7B and PATJ; the N-terminal L27 domain of PALS1 interacts with the L27 domain of PATJ and the C-terminal L27 domain of PALS1 interacts with the L27 domain of LIN7B. Component of a complex composed of PALS1, CRB1 and MPP4. Component of a complex whose core is composed of ARHGAP17, AMOT, PALS1, PATJ and PARD3/PAR3. Component of a complex composed of PALS1, CRB1 and EPB41L5. Within the complex, interacts (via HOOK domain) with EPB41L5 (via FERM domain), and interacts with CRB1 (via intracellular domain). Component of a complex composed of PALS1, MPP3 and CRB1; PALS1 acts as a bridging protein between MPP3 (via guanylate kinase-like domain) and CRB1. Component of a complex composed of CRB3, PALS1 and PATJ. As part of the Crumbs complex; interacts with WWP1, the interaction is enhanced by AMOTL2 and facilitates WWP1 localization to the plasma membrane. The Crumbs complex promotes monoubiquitination of AMOTL2 by WWP1, which activates the Hippo signaling pathway. Interacts (via PDZ domain) with PATJ (via N-terminus). Interacts with EZR. Interacts (via PDZ domain) with CRB1 (via C-terminal ERLI motif). While the PDZ domain is sufficient for interaction with CRB1, the adjacent SH3 and guanylate kinase-like domains are likely to contribute to a high affinity interaction. Interacts with WWTR1/TAZ (via WW domain). Interacts with MPP7. Interacts (via PDZ domain) with CRB3 (via C-terminus). Interacts with LIN7C. Interacts with MPDZ. Interacts with PARD6B. Interacts with SC6A1. Interacts with CDH5; the interaction promotes PALS1 localization to cell junctions and is required for CDH5-mediated vascular lumen formation and endothelial cell. Interacts with NPHP1 (via coiled coil and SH3 domains). Interacts with NPHP4. Interacts with CRB2. Expressed in the retinal pigment epithelium (at protein level). Expressed in the vascular plexus of the retina (at protein level). In the brain, expressed in the dentate gyrus of hippocampus, striatum and cerebellum (at protein level). Expressed in the sciatic nerve (at protein level). Expressed in the kidney nephron (at protein level). Expressed in the lung, and heart. Expressed in placenta, brain, skeletal muscles, pancreas and liver.

The protein resides in the golgi apparatus. It localises to the cell membrane. The protein localises to the endomembrane system. Its subcellular location is the cell junction. It is found in the tight junction. The protein resides in the adherens junction. It localises to the cell projection. The protein localises to the axon. Its subcellular location is the perikaryon. It is found in the apical cell membrane. In terms of biological role, plays a role in tight junction biogenesis and in the establishment of cell polarity in epithelial cells. Also involved in adherens junction biogenesis by ensuring correct localization of the exocyst complex protein EXOC4/SEC8 which allows trafficking of adherens junction structural component CDH1 to the cell surface. Plays a role through its interaction with CDH5 in vascular lumen formation and endothelial membrane polarity. Required during embryonic and postnatal retinal development. Required for the maintenance of cerebellar progenitor cells in an undifferentiated proliferative state, preventing premature differentiation, and is required for cerebellar histogenesis, fissure formation, cerebellar layer organization and cortical development. Plays a role in neuronal progenitor cell survival, potentially via promotion of mTOR signaling. Plays a role in the radial and longitudinal extension of the myelin sheath in Schwann cells. May modulate SC6A1/GAT1-mediated GABA uptake by stabilizing the transporter. May play a role in the T-cell receptor-mediated activation of NF-kappa-B. Required for localization of EZR to the apical membrane of parietal cells and may play a role in the dynamic remodeling of the apical cytoskeleton. Required for the normal polarized localization of the vesicular marker STX4. Required for the correct trafficking of the myelin proteins PMP22 and MAG. Involved in promoting phosphorylation and cytoplasmic retention of transcriptional coactivators YAP1 and WWTR1/TAZ which leads to suppression of TGFB1-dependent transcription of target genes such as CCN2/CTGF, SERPINE1/PAI1, SNAI1/SNAIL1 and SMAD7. The chain is Protein PALS1 from Mus musculus (Mouse).